Here is a 118-residue protein sequence, read N- to C-terminus: UPF0102 protein Nwi_0116 (118 aa).

Belongs to the UPF0102 family.

In Nitrobacter winogradskyi (strain ATCC 25391 / DSM 10237 / CIP 104748 / NCIMB 11846 / Nb-255), this protein is UPF0102 protein Nwi_0116.